The following is a 308-amino-acid chain: 2-methylisocitrate lyase (308 aa).

Substrate is bound at residue 51–53 (SGA). 2 residues coordinate Mg(2+): Asp-90 and Asp-92. Residues 127 to 128 (CG), Arg-160, Glu-190, 212 to 214 (NMT), Arg-243, and Arg-272 each bind substrate.

This sequence belongs to the isocitrate lyase/PEP mutase superfamily. Methylisocitrate lyase family. Homotetramer; dimer of dimers. Mg(2+) serves as cofactor.

It carries out the reaction (2S,3R)-3-hydroxybutane-1,2,3-tricarboxylate = pyruvate + succinate. It functions in the pathway organic acid metabolism; propanoate degradation. Functionally, involved in the catabolism of short chain fatty acids (SCFA) via the 2-methylcitrate cycle I (propionate degradation route). Catalyzes the thermodynamically favored C-C bond cleavage of (2R,3S)-2-methylisocitrate to yield pyruvate and succinate via an alpha-carboxy-carbanion intermediate. The protein is 2-methylisocitrate lyase of Aeropyrum pernix (strain ATCC 700893 / DSM 11879 / JCM 9820 / NBRC 100138 / K1).